The sequence spans 252 residues: 2-succinyl-6-hydroxy-2,4-cyclohexadiene-1-carboxylate synthase (252 aa).

It belongs to the AB hydrolase superfamily. MenH family. Monomer.

It catalyses the reaction 5-enolpyruvoyl-6-hydroxy-2-succinyl-cyclohex-3-ene-1-carboxylate = (1R,6R)-6-hydroxy-2-succinyl-cyclohexa-2,4-diene-1-carboxylate + pyruvate. Its pathway is quinol/quinone metabolism; 1,4-dihydroxy-2-naphthoate biosynthesis; 1,4-dihydroxy-2-naphthoate from chorismate: step 3/7. It functions in the pathway quinol/quinone metabolism; menaquinone biosynthesis. Its function is as follows. Catalyzes a proton abstraction reaction that results in 2,5-elimination of pyruvate from 2-succinyl-5-enolpyruvyl-6-hydroxy-3-cyclohexene-1-carboxylate (SEPHCHC) and the formation of 2-succinyl-6-hydroxy-2,4-cyclohexadiene-1-carboxylate (SHCHC). The polypeptide is 2-succinyl-6-hydroxy-2,4-cyclohexadiene-1-carboxylate synthase (Salmonella paratyphi A (strain ATCC 9150 / SARB42)).